Here is a 534-residue protein sequence, read N- to C-terminus: Kelch repeat and BTB domain-containing protein 4 (534 aa).

Residues M1–A25 are disordered. The BTB domain occupies A61–A128. Residues C163–H255 enclose the BACK domain. Kelch repeat units lie at residues H255–G301, D302–G344, A347–G394, I396–D446, and V448–D497.

In terms of assembly, component of the BCR(KBTBD4) E3 ubiquitin ligase complex, at least composed of CUL3, KBTBD4 and RBX1.

Substrate-specific adapter of a BCR (BTB-CUL3-RBX1) E3 ubiquitin ligase complex which targets CoREST corepressor complex components RCOR1, KDM1A/LSD1 and HDAC2 for proteasomal degradation. RCOR1 is likely to be the primary target while degradation of KDM1A and HDAC2 is likely due to their association with RCOR1. Also targets RCOR3, MIER2 and MIER3 for proteasomal degradation as well as associated proteins ZNF217 and RREB1. Degradation is dependent on the presence of an ELM2 domain in the target proteins. The chain is Kelch repeat and BTB domain-containing protein 4 (KBTBD4) from Homo sapiens (Human).